We begin with the raw amino-acid sequence, 248 residues long: ATP synthase subunit a (248 aa).

6 helical membrane passes run 34 to 54 (TNAT…LVFG), 91 to 111 (YFPY…LGLL), 121 to 141 (IAVT…LGFV), 147 to 167 (FLGL…LAVI), 196 to 216 (VFAA…AITA), and 220 to 240 (LEVL…CVYL).

This sequence belongs to the ATPase A chain family. In terms of assembly, F-type ATPases have 2 components, CF(1) - the catalytic core - and CF(0) - the membrane proton channel. CF(1) has five subunits: alpha(3), beta(3), gamma(1), delta(1), epsilon(1). CF(0) has three main subunits: a(1), b(2) and c(9-12). The alpha and beta chains form an alternating ring which encloses part of the gamma chain. CF(1) is attached to CF(0) by a central stalk formed by the gamma and epsilon chains, while a peripheral stalk is formed by the delta and b chains.

It is found in the cell inner membrane. Functionally, key component of the proton channel; it plays a direct role in the translocation of protons across the membrane. This chain is ATP synthase subunit a, found in Paracoccus denitrificans (strain Pd 1222).